Here is a 726-residue protein sequence, read N- to C-terminus: WD repeat-containing and planar cell polarity effector protein fritz homolog (726 aa).

2 WD repeats span residues 305 to 343 (LRSK…TLLA) and 344 to 383 (QAEL…INIQ). Residues 642-660 (SSGSTPKHTIQQKIPNGPS) are compositionally biased toward polar residues. Residues 642–717 (SSGSTPKHTI…RRQDTEDVGS (76 aa)) are disordered. Acidic residues predominate over residues 672–685 (MEETEEEEEEEEEA). Residues 701 to 712 (GELREDHRRQDT) show a composition bias toward basic and acidic residues.

It belongs to the WD repeat fritz family. Component of the CPLANE (ciliogenesis and planar polarity effectors) complex, composed of INTU, FUZ and WDPCP. Interacts with CPLANE1.

It localises to the cell membrane. Its subcellular location is the cytoplasm. It is found in the cytoskeleton. The protein localises to the cilium axoneme. The protein resides in the cilium basal body. In terms of biological role, probable effector of the planar cell polarity signaling pathway which regulates the septin cytoskeleton in both ciliogenesis and collective cell movements. Together with FUZ and WDPCP proposed to function as core component of the CPLANE (ciliogenesis and planar polarity effectors) complex involved in the recruitment of peripheral IFT-A proteins to basal bodies. Binds phosphatidylinositol 3-phosphate with highest affinity, followed by phosphatidylinositol 4-phosphate and phosphatidylinositol 5-phosphate. The protein is WD repeat-containing and planar cell polarity effector protein fritz homolog (Wdpcp) of Rattus norvegicus (Rat).